The sequence spans 556 residues: Formate--tetrahydrofolate ligase (556 aa).

65–72 (TPAGEGKT) contacts ATP.

The protein belongs to the formate--tetrahydrofolate ligase family.

The catalysed reaction is (6S)-5,6,7,8-tetrahydrofolate + formate + ATP = (6R)-10-formyltetrahydrofolate + ADP + phosphate. Its pathway is one-carbon metabolism; tetrahydrofolate interconversion. The polypeptide is Formate--tetrahydrofolate ligase (Alkaliphilus oremlandii (strain OhILAs) (Clostridium oremlandii (strain OhILAs))).